A 302-amino-acid chain; its full sequence is Acetylxylan esterase (302 aa).

Residues 1-20 (MPSVKETLTLLLSQAFLATG) form the signal peptide. A propeptide spanning residues 21–31 (SPVDGETVVKR) is cleaved from the precursor. Position 32 is a pyrrolidone carboxylic acid (Gln32). Asn94 carries an N-linked (GlcNAc...) asparagine glycan. Ser121 is a catalytic residue. Positions 236-273 (QLSSGGSQPPGGGPTSTSRPTSTRTGSSPGPTQTHWGQ) are disordered. The linker stretch occupies residues 244–266 (PPGGGPTSTSRPTSTRTGSSPGP). Residues 250-269 (TSTSRPTSTRTGSSPGPTQT) show a composition bias toward low complexity. The CBM1 domain occupies 266-302 (PTQTHWGQCGGQGWTGPTQCESGTTCQVISQWYSQCL). Intrachain disulfides connect Cys274–Cys291 and Cys285–Cys301.

It belongs to the cutinase family. Acetylxylan esterase subfamily. In terms of assembly, monomer. Glycosylated.

The protein localises to the secreted. It catalyses the reaction Deacetylation of xylans and xylo-oligosaccharides.. Its pathway is glycan degradation; xylan degradation. Inhibited by phenylmethylsulfonyl flouride. In terms of biological role, degrades acetylated xylans by cleaving acetyl side groups from the hetero-xylan backbone. The sequence is that of Acetylxylan esterase (axe1) from Hypocrea jecorina (Trichoderma reesei).